Here is a 606-residue protein sequence, read N- to C-terminus: MGKKNKGGAPNLGRQLIKDRFGHTQRRKVDNDTMLHTTELQDGYDWGRLNLSSVTEESSFQAFLRTAELAGTEFQAEKLNITFVNPKQRVGLLSKTQEQRMHQKHDEHRDQLKIPRRPKWTKETSAEELVRAENEAFLDWRRDLALLQEDEEILMTPYEKNLEFWRQLWRVVERSDVVVQIVDARNPLLFRSADLERYVKEVEPSKMNMILVNKSDLLTEEQRRHWAEYFDSEGIRTAFYSATLVEEELKREAEECLDSFPEVQQLRRAVEEIKQSLDSVEDALNVIEQKYKTIPETQNDELPRLPGDKNSPRLLSRLELIEFLRNIYTGPRHTEQHVTVGMVGYPNVGKSSTINSLMTVKKVSVSATPGKTKRFQTLFLDKDILLCDCPGLVMPSFVLTKADMLLNGILPIDQMRDHVPAVNLLCERIPRHVLEDKYGIVIAKPLEGEDMERPPHSEELLLAYGYNRGFMTSNGQPDQARSARYVLKDYVNGRLLYAMSPPSVPQTEYHTFPERQRRVIEESQLPGQQQRAMRINKSTSKELDNQFFSDKPTHAHVKGRTNFPNVRLANDGSLVAGNDPAAKPWRHVKKERREKLRKKFSHLDEH.

A disordered region spans residues 1–21 (MGKKNKGGAPNLGRQLIKDRF). In terms of domain architecture, CP-type G spans 165–395 (WRQLWRVVER…LCDCPGLVMP (231 aa)). 213 to 216 (NKSD) is a binding site for GTP. 2 positions are modified to phosphoserine: S276 and S279. GTP is bound by residues 344–351 (GYPNVGKS) and 388–391 (DCPG). Residues 574–606 (LVAGNDPAAKPWRHVKKERREKLRKKFSHLDEH) form a disordered region. The span at 584 to 600 (PWRHVKKERREKLRKKF) shows a compositional bias: basic residues.

This sequence belongs to the TRAFAC class YlqF/YawG GTPase family. LSG1 subfamily. Expressed in larval serotonergic neurons.

The protein localises to the cytoplasm. Its function is as follows. GTPase required for the nuclear export of the 60S ribosomal subunit. Probably acts by mediating the release of Nmd3 from the 60S ribosomal subunit after export into the cytoplasm. Regulator of body size; acts in serotonergic neurons to regulate insulin signaling and thus exerts global growth control. The protein is Large subunit GTPase 1 homolog (Ns3) of Drosophila melanogaster (Fruit fly).